We begin with the raw amino-acid sequence, 783 residues long: Galactinol--sucrose galactosyltransferase (783 aa).

Belongs to the glycosyl hydrolases 36 family.

It catalyses the reaction alpha-D-galactosyl-(1-&gt;3)-1D-myo-inositol + sucrose = raffinose + myo-inositol. Inhibited by Ag(2)+, Hg(2+), Zn(2+), p-chloromercuribenzoate (pCMB) and 1-deoxygalactonojirimycin. Its function is as follows. Transglycosidase operating by a ping-pong reaction mechanism. Involved in the synthesis of raffinose, a major soluble carbohydrate in seeds, roots and tubers. Specific for galactinol and p-nitrophenyl-alpha-D-galactoside as galactosyl donors. Able to utilize sucrose, lactose, 4-beta-galactobiose, N-acetyl-D-lactosamine, trehalose and lacto-N-biose as acceptors. May also act as a glycoside hydrolase. The polypeptide is Galactinol--sucrose galactosyltransferase (RFS) (Oryza sativa subsp. japonica (Rice)).